We begin with the raw amino-acid sequence, 386 residues long: Meiotic chromosome segregation protein C1539.02 (386 aa).

Disordered regions lie at residues 1-28 (MNQDDFRKLLATPKAETSQLKNFSSNKS), 46-85 (RALIKRKQLSHSTSSDITRHSNAKNSGKDTQFYEEPSSKQ), and 366-386 (DIHELGESDDDDNVKRRKTKG). Positions 15 to 28 (AETSQLKNFSSNKS) are enriched in polar residues.

Its subcellular location is the nucleus. Its function is as follows. Required for meiotic chromosome segregation. In Schizosaccharomyces pombe (strain 972 / ATCC 24843) (Fission yeast), this protein is Meiotic chromosome segregation protein C1539.02.